Here is a 596-residue protein sequence, read N- to C-terminus: uncharacterized protein (596 aa).

Composition is skewed to basic residues over residues 1–10 (MRLRSQKRGN) and 18–29 (KTRKGKGKKLKP). A disordered region spans residues 1-30 (MRLRSQKRGNKFVALPAKTRKGKGKKLKPK).

This is an uncharacterized protein from Magallana gigas (Pacific oyster).